The primary structure comprises 64 residues: Large ribosomal subunit protein bL35 (64 aa).

Composition is skewed to basic residues over residues 1 to 15 (MPKA…KRFR) and 23 to 42 (VRQK…KRTR). The disordered stretch occupies residues 1–45 (MPKAKTHSGASKRFRTTGSGKVVRQKANRRHLLEHKPTKRTRRLD).

It belongs to the bacterial ribosomal protein bL35 family.

This is Large ribosomal subunit protein bL35 from Mycolicibacterium vanbaalenii (strain DSM 7251 / JCM 13017 / BCRC 16820 / KCTC 9966 / NRRL B-24157 / PYR-1) (Mycobacterium vanbaalenii).